Reading from the N-terminus, the 79-residue chain is Acyl carrier protein (79 aa).

The Carrier domain occupies Ala4–Lys79. O-(pantetheine 4'-phosphoryl)serine is present on Ser39.

This sequence belongs to the acyl carrier protein (ACP) family. 4'-phosphopantetheine is transferred from CoA to a specific serine of apo-ACP by AcpS. This modification is essential for activity because fatty acids are bound in thioester linkage to the sulfhydryl of the prosthetic group.

Its subcellular location is the cytoplasm. It functions in the pathway lipid metabolism; fatty acid biosynthesis. Functionally, carrier of the growing fatty acid chain in fatty acid biosynthesis. In Chlorobaculum parvum (strain DSM 263 / NCIMB 8327) (Chlorobium vibrioforme subsp. thiosulfatophilum), this protein is Acyl carrier protein.